The primary structure comprises 369 residues: MSSRGGKKKSTKTSRSAKAGVIFPVGRMLRYIKKGHPKYRIGVGAPVYMAAVLEYLTAEILELAGNAARDNKKGRVTPRHILLAVANDEELNQLLKGVTIASGGVLPNIHPELLAKKRGSKGKLEAIITPPPAKKAKSPSQKKTVSKKTGGKKGARKSKKKQGEVSKSASADSTTEGTPADGFTVLSTKSLFLGQKLQVVQADIATIDSDAVVHPTNSDFYTGGEVGSTLEKKGGKEFVEAVIELRKKNGPLDIAGAVVSAGHGLPAKFVIHCNSPGWGSDKCEELLEKTVKNCLALADEKKLKSIAFPSIGSGRNGFPKQTAAQLILKAISSYFVSTMSSSIKTVYFVLFDSESIGIYVQEMAKLDAN.

Residues lysine 7 and lysine 9 each carry the N6-lactoyllysine; alternate modification. One can recognise a Histone H2A domain in the interval 15–90; that stretch reads RSAKAGVIFP…ILLAVANDEE (76 aa). Lysine 18 carries the N6-methyllysine modification. The residue at position 116 (lysine 116) is an N6-acetyllysine; alternate. A Glycyl lysine isopeptide (Lys-Gly) (interchain with G-Cter in ubiquitin); alternate cross-link involves residue lysine 116. Residue lysine 117 forms a Glycyl lysine isopeptide (Lys-Gly) (interchain with G-Cter in ubiquitin) linkage. Lysine 123 bears the N6-acetyllysine; alternate mark. Lysine 123 carries the post-translational modification N6,N6-dimethyllysine; alternate. Lysine 123 is covalently cross-linked (Glycyl lysine isopeptide (Lys-Gly) (interchain with G-Cter in SUMO2); alternate). Residues 128–180 form a disordered region; sequence ITPPPAKKAKSPSQKKTVSKKTGGKKGARKSKKKQGEVSKSASADSTTEGTPA. The residue at position 129 (threonine 129) is a Phosphothreonine. The segment covering 144-160 has biased composition (basic residues); the sequence is TVSKKTGGKKGARKSKK. The span at 165–177 shows a compositional bias: polar residues; the sequence is VSKSASADSTTEG. Lysine 167 participates in a covalent cross-link: Glycyl lysine isopeptide (Lys-Gly) (interchain with G-Cter in SUMO2). 2 positions are modified to phosphoserine: serine 170 and serine 173. A Phosphothreonine modification is found at threonine 178. The region spanning 184-367 is the Macro domain; it reads TVLSTKSLFL…IYVQEMAKLD (184 aa). A Glycyl lysine isopeptide (Lys-Gly) (interchain with G-Cter in SUMO2) cross-link involves residue lysine 189. A glycoprotein contacts are provided by aspartate 203, isoleucine 204, valine 226, serine 275, glycine 312, serine 313, glycine 314, and asparagine 316. Residue lysine 320 forms a Glycyl lysine isopeptide (Lys-Gly) (interchain with G-Cter in SUMO2) linkage.

It belongs to the histone H2A family. The nucleosome is a histone octamer containing two molecules each of H2A, H2B, H3 and H4 assembled in one H3-H4 heterotetramer and two H2A-H2B heterodimers. ADP-ribosylated. Post-translationally, monoubiquitinated at either Lys-116 or Lys-117. May also be polyubiquitinated. Ubiquitination is mediated by the CUL3/SPOP E3 complex and does not promote proteasomal degradation. Instead, it is required for enrichment in inactive X chromosome chromatin. In terms of tissue distribution, present in liver (at protein level).

Its subcellular location is the nucleus. It localises to the chromosome. In terms of biological role, variant histone H2A which replaces conventional H2A in a subset of nucleosomes where it represses transcription. Nucleosomes wrap and compact DNA into chromatin, limiting DNA accessibility to the cellular machineries which require DNA as a template. Histones thereby play a central role in transcription regulation, DNA repair, DNA replication and chromosomal stability. DNA accessibility is regulated via a complex set of post-translational modifications of histones, also called histone code, and nucleosome remodeling. Isoform that specifically binds poly-ADP-ribose and O-acetyl-ADP-ribose and plays a key role in NAD(+) metabolism. Able to bind to the ends of poly-ADP-ribose chains created by PARP1 and cap them. This prevents PARP1 from further addition of ADP-ribose and thus limits the consumption of nuclear NAD(+), allowing the cell to maintain proper NAD(+) levels in both the nucleus and the mitochondria to promote proper mitochondrial respiration. Functionally, in contrast to isoform 1, does not bind poly-ADP-ribose. The protein is Core histone macro-H2A.1 of Gallus gallus (Chicken).